We begin with the raw amino-acid sequence, 427 residues long: Tryptophan synthase beta chain 1 (427 aa).

Lysine 107 carries the post-translational modification N6-(pyridoxal phosphate)lysine.

The protein belongs to the TrpB family. As to quaternary structure, tetramer of two alpha and two beta chains. The cofactor is pyridoxal 5'-phosphate.

The enzyme catalyses (1S,2R)-1-C-(indol-3-yl)glycerol 3-phosphate + L-serine = D-glyceraldehyde 3-phosphate + L-tryptophan + H2O. The protein operates within amino-acid biosynthesis; L-tryptophan biosynthesis; L-tryptophan from chorismate: step 5/5. Its function is as follows. The beta subunit is responsible for the synthesis of L-tryptophan from indole and L-serine. This Aeropyrum pernix (strain ATCC 700893 / DSM 11879 / JCM 9820 / NBRC 100138 / K1) protein is Tryptophan synthase beta chain 1 (trpB1).